The following is an 88-amino-acid chain: MASSDKAFTLDIVTPQKLFFSGEINSVIAPGLNGLFQVLKGHAPLLAALKSGKVRLSLSDRSEDTFQIAGGFFEVSGNKAILLTEEVS.

The protein belongs to the ATPase epsilon chain family. As to quaternary structure, F-type ATPases have 2 components, CF(1) - the catalytic core - and CF(0) - the membrane proton channel. CF(1) has five subunits: alpha(3), beta(3), gamma(1), delta(1), epsilon(1). CF(0) has three main subunits: a, b and c.

Its subcellular location is the cell inner membrane. Functionally, produces ATP from ADP in the presence of a proton gradient across the membrane. The polypeptide is ATP synthase epsilon chain (atpC) (Chlorobaculum tepidum (strain ATCC 49652 / DSM 12025 / NBRC 103806 / TLS) (Chlorobium tepidum)).